The primary structure comprises 499 residues: Zinc finger protein PLAG1 (499 aa).

Residues 1-33 (MATVIPGDLSEVRDTQKAPSGKRKRGESKPRKN) are disordered. The tract at residues 2 to 84 (ATVIPGDLSE…SKYKLQRHMA (83 aa)) is interaction with KPNA2. A Nuclear localization signal motif is present at residues 22-25 (KRKR). C2H2-type zinc fingers lie at residues 34 to 56 (FPCQ…SFSH), 62 to 86 (YKCT…MATH), 92 to 114 (HKCN…LHTH), 121 to 143 (FKCE…LALH), 150 to 172 (LTCK…LKSH), 185 to 207 (HQCE…MVVH), and 213 to 236 (FLCQ…KKSH). The segment at 41–242 (KAFNSVEKLK…KKSHNQELLK (202 aa)) is decreased nuclear import with localization in the nucleus but also in the cytoplasm. The tract at residues 243-383 (VKTEPVDFLD…SPASSSKLGL (141 aa)) is repression domain; contains 3 sumoylation motifs and massively decrease transcription activity. Residues 243–499 (VKTEPVDFLD…TLPRFHQAFQ (257 aa)) are activates transcription; Inhibition of nuclear import due to lack of NLS and KPNA2 interaction. Glycyl lysine isopeptide (Lys-Gly) (interchain with G-Cter in SUMO) cross-links involve residues Lys-244 and Lys-263. Residues 365–379 (GGAPSSSQDSPASSS) are compositionally biased toward low complexity. Residues 365–400 (GGAPSSSQDSPASSSKLGLEPQSGSPDDGAGDLSLS) are disordered. A massively activates transcription region spans residues 384 to 499 (EPQSGSPDDG…TLPRFHQAFQ (116 aa)).

Belongs to the krueppel C2H2-type zinc-finger protein family. In terms of assembly, interacts with KPNA2, which escorts protein to the nucleus via interaction with nuclear localization signal. Interacts with E3 SUMO-protein ligase PIAS1, PIAS2 and PIAS4. Sumoylated with SUMO1; which inhibits transcriptional activity, but does not affect nuclear localization. Blockers of sumoylation pathway such as SENP3 and inactive UBE2I increases transcriptional capacity. Sumoylation is increased in the presence of PIAS1. In terms of processing, acetylated by lysine acetyltransferase EP300; which activates transcriptional capacity. Lysine residues that are sumoylated also seem to be target for acetylation. Expressed in heart, spleen, lung, kidney, brain, testis and epididymis but not in salivary glands.

It is found in the nucleus. Its function is as follows. Transcription factor whose activation results in up-regulation of target genes, such as IGFII, leading to uncontrolled cell proliferation: when overexpressed in cultured cells, higher proliferation rate and transformation are observed. Other target genes such as CRLF1, CRABP2, CRIP2, PIGF are strongly induced in cells with PLAG1 induction. Proto-oncogene whose ectopic expression can trigger the development of pleomorphic adenomas of the salivary gland and lipoblastomas. Cooperates with CBFB-MYH11. The sequence is that of Zinc finger protein PLAG1 (Plag1) from Mus musculus (Mouse).